A 701-amino-acid chain; its full sequence is DNA ligase (701 aa).

Residues 43–47 (DADYD), 92–93 (SL), and Glu-126 contribute to the NAD(+) site. Catalysis depends on Lys-128, which acts as the N6-AMP-lysine intermediate. 4 residues coordinate NAD(+): Arg-149, Glu-186, Lys-302, and Lys-326. Positions 417, 420, 440, and 446 each coordinate Zn(2+). Residues 622-701 (ETGSPVTGKT…DEWLALIGET (80 aa)) form the BRCT domain.

The protein belongs to the NAD-dependent DNA ligase family. LigA subfamily. The cofactor is Mg(2+). Mn(2+) is required as a cofactor.

It catalyses the reaction NAD(+) + (deoxyribonucleotide)n-3'-hydroxyl + 5'-phospho-(deoxyribonucleotide)m = (deoxyribonucleotide)n+m + AMP + beta-nicotinamide D-nucleotide.. Functionally, DNA ligase that catalyzes the formation of phosphodiester linkages between 5'-phosphoryl and 3'-hydroxyl groups in double-stranded DNA using NAD as a coenzyme and as the energy source for the reaction. It is essential for DNA replication and repair of damaged DNA. The polypeptide is DNA ligase (Hyphomonas neptunium (strain ATCC 15444)).